A 282-amino-acid chain; its full sequence is tRNA N(3)-cytidine methyltransferase METTL6 (282 aa).

Positions 45, 49, 87, 110, 136, 137, and 157 each coordinate S-adenosyl-L-methionine.

The protein belongs to the methyltransferase superfamily. METL family. In terms of assembly, monomer. Interacts with SARS1/SerRS; interaction is mediated via tRNA(Ser) and is required for N(3)-methylcytidine methylation.

Its subcellular location is the cytoplasm. It localises to the nucleus. It carries out the reaction cytidine(32) in tRNA(Ser) + S-adenosyl-L-methionine = N(3)-methylcytidine(32) in tRNA(Ser) + S-adenosyl-L-homocysteine + H(+). Its function is as follows. S-adenosyl-L-methionine-dependent methyltransferase that mediates N(3)-methylcytidine modification of residue 32 of the tRNA anticodon loop of tRNA(Ser), including tRNA(Ser)(UGA) and tRNA(Ser)(GCU). Interaction with SARS1/SerRS is required for N(3)-methylcytidine methylation. The chain is tRNA N(3)-cytidine methyltransferase METTL6 from Mus musculus (Mouse).